The sequence spans 872 residues: MKELSSAQIRQMWLDFWKSKGHSVEPSANLVPVNDPTLLWINSGVATLKKYFDGSVIPENPRITNAQKSIRTNDIENVGKTARHHTMFEMLGNFSIGDYFRDEAIEWGFELLTSPEWFDFPKDKLYMTYYPDDKDSYNRWIACGVEPSHLVPIEDNFWEIGAGPSGPDTEIFFDRGEDFDPDNIGLRLLAEDIENDRYIEIWNIVLSQFNADPAVPRSEYKELPNKNIDTGAGLERLAAVMQGAKTNFETDLFMPIIREVEKLSGKTYDPDGDNMSFKVIADHIRALSFAIGDGALPGNEGRGYVLRRLLRRAVMHGRRLGINETFLYKLVPTVGQIMESYYPEVLEKRDFIEKIVKREEETFARTIDAGSGHLDSLLAQLKAEGKDTLEGKDIFKLYDTYGFPVELTEELAEDAGYKIDHEGFKSAMKEQQDRARAAVVKGGSMGMQNETLAGIVEESRFEYDTYSLESSLSVIIADNERTEAVSEGQALLVFAQTPFYAEMGGQVADTGRIKNDKGDTVAEVVDVQKAPNGQPLHTVNVLASLSVGTNYTLEINKERRLAVEKNHTATHLLHAALHNVIGEHATQAGSLNEEEFLRFDFTHFEAVSNEELRHIEQEVNEQIWNALTITTTETDVETAKEMGAMALFGEKYGKVVRVVQIGNYSVELCGGTHLNNSSEIGLFKIVKEEGIGSGTRRIIAVTGRQAFEAYRNQEDALKEIAATVKAPQLKDAAAKVQALSDSLRDLQKENVELKEKAAAAAAGDVFKDIQEAKGVRFIASQVDVADAGALRTFADNWKQKDYSDVLVLVAAIGEKVNVLVASKTKDVHAGNMIKGLAPIVAGRGGGKPDMAMAGGSDASKIAELLAAVAENL.

Zn(2+) is bound by residues H567, H571, C669, and H673.

It belongs to the class-II aminoacyl-tRNA synthetase family. Requires Zn(2+) as cofactor.

It is found in the cytoplasm. The catalysed reaction is tRNA(Ala) + L-alanine + ATP = L-alanyl-tRNA(Ala) + AMP + diphosphate. Functionally, catalyzes the attachment of alanine to tRNA(Ala) in a two-step reaction: alanine is first activated by ATP to form Ala-AMP and then transferred to the acceptor end of tRNA(Ala). Also edits incorrectly charged Ser-tRNA(Ala) and Gly-tRNA(Ala) via its editing domain. The sequence is that of Alanine--tRNA ligase from Streptococcus agalactiae serotype III (strain NEM316).